The following is a 263-amino-acid chain: MRIAIIGGTGVYDPKFLENPEEIKVSTPYGEVKLLKGIYQGEEVGFLARHGAGHTVPPHRINYKANMWALKSLGVERILSTTAVGSLKLNLVPGDLVILDQFIDFTKNRDHTFYNGDDGKVIHIDFTNPYCPELRNILYETSKEIGIKAHPFGTYVCTEGPRFETPAEIKMYSFFGDVVGMTNVPEVILARELEICYASVSLVTNYAAGISPNPLTHSEVLEVMTQNIEKVRKLFAAVIPKIPKERNCICKNALKEYREKGLL.

Phosphate contacts are provided by residues Thr9, 49 to 50 (RH), and 82 to 83 (TA). Met181 is a binding site for substrate. Residue Thr182 coordinates phosphate. 205–207 (NYA) provides a ligand contact to substrate.

This sequence belongs to the PNP/MTAP phosphorylase family. MTAP subfamily. In terms of assembly, homohexamer. Dimer of a homotrimer.

The catalysed reaction is a purine D-ribonucleoside + phosphate = a purine nucleobase + alpha-D-ribose 1-phosphate. It participates in purine metabolism; purine nucleoside salvage. In terms of biological role, purine nucleoside phosphorylase which is highly specific for 6-oxopurine nucleosides. Cleaves guanosine or inosine to respective bases and sugar-1-phosphate molecules. Involved in purine salvage. This chain is Probable 6-oxopurine nucleoside phosphorylase, found in Dictyoglomus turgidum (strain DSM 6724 / Z-1310).